The chain runs to 265 residues: Undecaprenyl-diphosphatase (265 aa).

The next 8 helical transmembrane spans lie at 1-21 (MDFLQSIILGIIQGITEFLPI), 39-59 (QGVGFDLAVHVGTLLAVILYF), 87-107 (WAVVVGTIPACIAGILLLDYI), 110-130 (ALRAVGVIITTTVVFAVLLAA), 144-164 (IGFKDAIIVGLAQAVALIPGT), 187-207 (FSFFMAIPITAAAALVKLLTI), 217-237 (LGFLVGGIVSFLTAITAIHFF), and 244-264 (FGMWPYVIYRLVLAVVLYLLF).

Belongs to the UppP family.

It localises to the cell inner membrane. The enzyme catalyses di-trans,octa-cis-undecaprenyl diphosphate + H2O = di-trans,octa-cis-undecaprenyl phosphate + phosphate + H(+). Functionally, catalyzes the dephosphorylation of undecaprenyl diphosphate (UPP). Confers resistance to bacitracin. This chain is Undecaprenyl-diphosphatase, found in Idiomarina loihiensis (strain ATCC BAA-735 / DSM 15497 / L2-TR).